Here is a 149-residue protein sequence, read N- to C-terminus: Glycophorin-A (149 aa).

Residues 1–19 form the signal peptide; sequence MYGKIIFVLLLSAIVSISA. At 20 to 90 the chain is on the extracellular side; that stretch reads SSTTEVAMHT…QLVHRFSEPE (71 aa). Ser-21 is a glycosylation site (O-linked (GalNAc...) serine). 3 O-linked (GalNAc...) threonine glycosylation sites follow: Thr-22, Thr-23, and Thr-29. The O-linked (GalNAc...) serine glycan is linked to Ser-30. O-linked (GalNAc...) threonine glycosylation is present at Thr-31. Ser-32 is a glycosylation site (O-linked (GalNAc...) serine). Residue Thr-35 is glycosylated (O-linked (GalNAc...) threonine). Residues Ser-37 and Ser-40 are each glycosylated (O-linked (GalNAc...) serine). Residue Thr-43 is glycosylated (O-linked (GalNAc...) threonine). The O-linked (GalNAc...) serine glycan is linked to Ser-44. Thr-51 and Thr-55 each carry an O-linked (GalNAc...) threonine glycan. A glycan (O-linked (GalNAc...) serine) is linked at Ser-62. O-linked (GalNAc...) threonine glycosylation occurs at Thr-68. The helical transmembrane segment at 91–113 threads the bilayer; that stretch reads ITLIIFGVMAGVIGTILLIYYSI. Topologically, residues 114–149 are cytoplasmic; it reads RRLIKKSPSDVKPLPSPDTDVPLSSVEIENPETSDQ. Residues 122–149 are disordered; that stretch reads SDVKPLPSPDTDVPLSSVEIENPETSDQ. Phosphoserine occurs at positions 137 and 147.

This sequence belongs to the glycophorin-A family. In terms of assembly, homodimer. Component of the ankyrin-1 complex in the erythrocyte, composed of ANK1, RHCE, RHAG, SLC4A1, EPB42, GYPA, GYPB and AQP1. Interacts with SLC4A1; a GYPA monomer is bound at each end of the SLC4A1 dimer forming a heterotetramer.

The protein localises to the cell membrane. In terms of biological role, component of the ankyrin-1 complex, a multiprotein complex involved in the stability and shape of the erythrocyte membrane. Glycophorin A is the major intrinsic membrane protein of the erythrocyte. The N-terminal glycosylated segment, which lies outside the erythrocyte membrane, has MN blood group receptors. Appears to be important for the function of SLC4A1 and is required for high activity of SLC4A1. May be involved in translocation of SLC4A1 to the plasma membrane. This is Glycophorin-A from Pan troglodytes (Chimpanzee).